The sequence spans 1179 residues: ATP-dependent helicase/deoxyribonuclease subunit B (1179 aa).

The protein belongs to the helicase family. AddB/RexB type 2 subfamily. In terms of assembly, heterodimer of AddA and RexB. It depends on Mg(2+) as a cofactor.

Functionally, the heterodimer acts as both an ATP-dependent DNA helicase and an ATP-dependent, dual-direction single-stranded exonuclease. Recognizes the chi site generating a DNA molecule suitable for the initiation of homologous recombination. This subunit has 5' -&gt; 3' nuclease activity but not helicase activity. In Lactobacillus delbrueckii subsp. bulgaricus (strain ATCC BAA-365 / Lb-18), this protein is ATP-dependent helicase/deoxyribonuclease subunit B.